The following is a 266-amino-acid chain: Glucosamine-6-phosphate deaminase (266 aa).

Residue aspartate 72 is the Proton acceptor; for enolization step of the active site. Aspartate 141 acts as the For ring-opening step in catalysis. Histidine 143 acts as the Proton acceptor; for ring-opening step in catalysis. Catalysis depends on glutamate 148, which acts as the For ring-opening step.

Belongs to the glucosamine/galactosamine-6-phosphate isomerase family. NagB subfamily. As to quaternary structure, homohexamer; trimer of disulfide-linked dimers.

It catalyses the reaction alpha-D-glucosamine 6-phosphate + H2O = beta-D-fructose 6-phosphate + NH4(+). It participates in amino-sugar metabolism; N-acetylneuraminate degradation; D-fructose 6-phosphate from N-acetylneuraminate: step 5/5. With respect to regulation, allosterically activated by N-acetylglucosamine 6-phosphate (GlcNAc6P). Functionally, catalyzes the reversible isomerization-deamination of glucosamine 6-phosphate (GlcN6P) to form fructose 6-phosphate (Fru6P) and ammonium ion. This is Glucosamine-6-phosphate deaminase from Shigella flexneri serotype 5b (strain 8401).